The sequence spans 245 residues: NAD(P)H-quinone oxidoreductase subunit K (245 aa).

[4Fe-4S] cluster-binding residues include Cys-58, Cys-59, Cys-123, and Cys-154.

This sequence belongs to the complex I 20 kDa subunit family. As to quaternary structure, NDH-1 can be composed of about 15 different subunits; different subcomplexes with different compositions have been identified which probably have different functions. [4Fe-4S] cluster serves as cofactor.

The protein localises to the cellular thylakoid membrane. The enzyme catalyses a plastoquinone + NADH + (n+1) H(+)(in) = a plastoquinol + NAD(+) + n H(+)(out). It carries out the reaction a plastoquinone + NADPH + (n+1) H(+)(in) = a plastoquinol + NADP(+) + n H(+)(out). Its function is as follows. NDH-1 shuttles electrons from an unknown electron donor, via FMN and iron-sulfur (Fe-S) centers, to quinones in the respiratory and/or the photosynthetic chain. The immediate electron acceptor for the enzyme in this species is believed to be plastoquinone. Couples the redox reaction to proton translocation, and thus conserves the redox energy in a proton gradient. Cyanobacterial NDH-1 also plays a role in inorganic carbon-concentration. The sequence is that of NAD(P)H-quinone oxidoreductase subunit K from Trichormus variabilis (strain ATCC 29413 / PCC 7937) (Anabaena variabilis).